A 247-amino-acid polypeptide reads, in one-letter code: MRYRAVVEYDGTAFIGWQRQKGVAGRSVQESIEDAIYRLSQQCVTVFAAGRTDAGVHALGQVVHFDLNTSLQDYVIKNALNHYLRSDMVSILSLEEAAEGFHARFSAKKRHYMYKIVNRDAPPCLDRLRMWHVPKQLNVSDMQEAASHMVGEKKDFASFRAKECQSKSSVRTVDRIDCVREGNNIFVHVSAKSFLHKQVRIIVGTLVQCGHGAFPPSYVLEILERKNRAAAGITAPPHGLYLVLVEY.

The Nucleophile role is filled by aspartate 53. Substrate is bound at residue tyrosine 112.

It belongs to the tRNA pseudouridine synthase TruA family. As to quaternary structure, homodimer.

It carries out the reaction uridine(38/39/40) in tRNA = pseudouridine(38/39/40) in tRNA. Formation of pseudouridine at positions 38, 39 and 40 in the anticodon stem and loop of transfer RNAs. In Anaplasma marginale (strain St. Maries), this protein is tRNA pseudouridine synthase A.